An 826-amino-acid chain; its full sequence is Ribonucleoside-diphosphate reductase large subunit (826 aa).

Substrate-binding positions include T171, S186–C187, G217, N387–E391, and P594–C598. An intrachain disulfide couples C187 to C403. The active-site Proton acceptor is N387. The active-site Cysteine radical intermediate is the C389. E391 (proton acceptor) is an active-site residue. A disordered region spans residues S747–P769. Residues P749 to P758 show a composition bias toward basic and acidic residues.

Belongs to the ribonucleoside diphosphate reductase large chain family. Heterotetramer composed of a homodimer of the large subunit (R1) and a homodimer of the small subunit (R2). Larger multisubunit protein complex are also active, composed of (R1)n(R2)n.

The catalysed reaction is a 2'-deoxyribonucleoside 5'-diphosphate + [thioredoxin]-disulfide + H2O = a ribonucleoside 5'-diphosphate + [thioredoxin]-dithiol. In terms of biological role, ribonucleoside-diphosphate reductase holoenzyme provides the precursors necessary for viral DNA synthesis. Allows virus growth in non-dividing cells, as well as reactivation from latency in infected hosts. Catalyzes the biosynthesis of deoxyribonucleotides from the corresponding ribonucleotides. This chain is Ribonucleoside-diphosphate reductase large subunit, found in Homo sapiens (Human).